We begin with the raw amino-acid sequence, 396 residues long: Stearoyl-[acyl-carrier-protein] 9-desaturase, chloroplastic (396 aa).

Residues 1-33 (MALRITPVTLQSERYRSFSFPKKANLRSPKFAM) constitute a chloroplast transit peptide. A34 carries the post-translational modification Blocked amino end (Ala); partial. Residues E138, E176, H179, E229, E262, and H265 each contribute to the Fe cation site.

The protein belongs to the fatty acid desaturase type 2 family. In terms of assembly, homodimer. Requires Fe(2+) as cofactor. Post-translationally, most of the N-terminus is blocked.

It is found in the plastid. Its subcellular location is the chloroplast. It catalyses the reaction octadecanoyl-[ACP] + 2 reduced [2Fe-2S]-[ferredoxin] + O2 + 2 H(+) = (9Z)-octadecenoyl-[ACP] + 2 oxidized [2Fe-2S]-[ferredoxin] + 2 H2O. Its pathway is lipid metabolism; fatty acid metabolism. Converts stearoyl-ACP to oleoyl-ACP by introduction of a cis double bond between carbons 9 and 10 of the acyl chain. The protein is Stearoyl-[acyl-carrier-protein] 9-desaturase, chloroplastic of Carthamus tinctorius (Safflower).